Reading from the N-terminus, the 256-residue chain is Homeobox protein goosecoid (256 aa).

Residues K160–K219 constitute a DNA-binding region (homeobox). The disordered stretch occupies residues A213 to S256. Over residues S240–S256 the composition is skewed to basic and acidic residues.

It belongs to the paired homeobox family. Bicoid subfamily. As to expression, in early gastrulation, expressed in the dorsal lip. In later stages of development found in head, limbs and body wall. In the embryo, expressed in the postotic cranial neural crest cells, the frontonasal prominence, the first branchial arch and cleft, and specific regions of large joints.

Its subcellular location is the nucleus. Regulates chordin (CHRD). May play a role in spatial programing within discrete embryonic fields or lineage compartments during organogenesis. In concert with NKX3-2, plays a role in defining the structural components of the middle ear; required for the development of the entire tympanic ring. Goosecoid-expressing regions of the gastrulating mouse egg cylinder have organizer-like activity when transplanted into Xenopus embryos. Probably involved in the regulatory networks that define neural crest cell fate specification and determine mesoderm cell lineages in mammals. This is Homeobox protein goosecoid (Gsc) from Mus musculus (Mouse).